A 163-amino-acid chain; its full sequence is Putative H/ACA ribonucleoprotein complex subunit 2-like protein (163 aa).

Residues 1–27 (MGKRNLDETMNESTVSEANGDATAPTT) are disordered.

The protein belongs to the eukaryotic ribosomal protein eL8 family. In terms of assembly, component of the small nucleolar ribonucleoprotein particle containing H/ACA-type snoRNAs (H/ACA snoRNPs).

It localises to the nucleus. The protein resides in the nucleolus. Its function is as follows. Required for ribosome biogenesis. Part of a complex which catalyzes pseudouridylation of rRNA. This involves the isomerization of uridine such that the ribose is subsequently attached to C5, instead of the normal N1. Pseudouridine ('psi') residues may serve to stabilize the conformation of rRNAs. In Caenorhabditis elegans, this protein is Putative H/ACA ribonucleoprotein complex subunit 2-like protein.